The sequence spans 607 residues: Probable LRR receptor-like serine/threonine-protein kinase At5g65240 (607 aa).

Residues 1 to 24 (MALLIITALVFSSLWSSVSPDAQG) form the signal peptide. Residues 25 to 219 (DALFALRSSL…SGDSSSRKTG (195 aa)) lie on the Extracellular side of the membrane. Residues asparagine 74 and asparagine 110 are each glycosylated (N-linked (GlcNAc...) asparagine). LRR repeat units lie at residues 87-111 (LTTL…IGNL), 112-135 (SSLT…LGNL), 137-159 (NLQF…LTGL), and 160-183 (SKLI…LFKI). 4 N-linked (GlcNAc...) asparagine glycosylation sites follow: asparagine 149, asparagine 171, asparagine 187, and asparagine 192. Residues 220–240 (IIAGVVSGIAVILLGFFFFFF) form a helical membrane-spanning segment. Over 241–607 (CKDKHKGYKR…QDAIELSGGR (367 aa)) the chain is Cytoplasmic. Threonine 281 is subject to Phosphothreonine. Residues 284 to 568 (FSEKNVLGQG…EGEGLAERWE (285 aa)) form the Protein kinase domain. Position 290-298 (290-298 (LGQGGFGKV)) interacts with ATP. A Phosphothreonine modification is found at threonine 307. Lysine 312 provides a ligand contact to ATP. Serine 365 carries the phosphoserine modification. The active-site Proton acceptor is the aspartate 411. 3 positions are modified to phosphothreonine: threonine 444, threonine 445, and threonine 450. Serine 460 carries the phosphoserine modification. Threonine 461 is modified (phosphothreonine). Residue serine 465 is modified to Phosphoserine. Phosphothreonine is present on threonine 541.

This sequence belongs to the protein kinase superfamily. Ser/Thr protein kinase family.

It is found in the cell membrane. It catalyses the reaction L-seryl-[protein] + ATP = O-phospho-L-seryl-[protein] + ADP + H(+). It carries out the reaction L-threonyl-[protein] + ATP = O-phospho-L-threonyl-[protein] + ADP + H(+). The chain is Probable LRR receptor-like serine/threonine-protein kinase At5g65240 from Arabidopsis thaliana (Mouse-ear cress).